The chain runs to 214 residues: Rac-like GTP-binding protein 3 (214 aa).

Residue 15 to 22 (GDGAVGKT) participates in GTP binding. An Effector region motif is present at residues 37–45 (YIPTVFDNF). Residues 62–66 (DTAGQ) and 120–123 (TKLD) contribute to the GTP site.

Belongs to the small GTPase superfamily. Rho family. Post-translationally, may be palmitoylated.

The protein resides in the cytoplasm. The protein localises to the membrane. Inactive GDP-bound Rho GTPases reside in the cytosol, are found in a complex with Rho GDP-dissociation inhibitors (Rho GDIs), and are released from the GDI protein in order to translocate to membranes upon activation. The sequence is that of Rac-like GTP-binding protein 3 (RAC3) from Oryza sativa subsp. japonica (Rice).